An 86-amino-acid chain; its full sequence is Sec-independent protein translocase protein TatA (86 aa).

The helical transmembrane segment at 1–21 (MGGISIWQLLIIAVIVVLLFG) threads the bilayer. The interval 42–86 (AIGDDNQPQQAQKTSSDADFETKNITEKQSVAQSETSESKNKEQV) is disordered. Composition is skewed to polar residues over residues 47 to 58 (NQPQQAQKTSSD) and 68 to 77 (EKQSVAQSET).

It belongs to the TatA/E family. In terms of assembly, the Tat system comprises two distinct complexes: a TatABC complex, containing multiple copies of TatA, TatB and TatC subunits, and a separate TatA complex, containing only TatA subunits. Substrates initially bind to the TatABC complex, which probably triggers association of the separate TatA complex to form the active translocon.

It localises to the cell inner membrane. Part of the twin-arginine translocation (Tat) system that transports large folded proteins containing a characteristic twin-arginine motif in their signal peptide across membranes. TatA could form the protein-conducting channel of the Tat system. The sequence is that of Sec-independent protein translocase protein TatA from Photorhabdus laumondii subsp. laumondii (strain DSM 15139 / CIP 105565 / TT01) (Photorhabdus luminescens subsp. laumondii).